A 219-amino-acid polypeptide reads, in one-letter code: Probable GTP-binding protein EngB (219 aa).

One can recognise an EngB-type G domain in the interval 24–207; it reads VQPEIAFAGR…HELIESWLRP (184 aa). GTP contacts are provided by residues 32 to 39, 59 to 63, 81 to 84, 148 to 151, and 186 to 188; these read GRSNAGKS, GRTQH, DLPG, TKCD, and FSA. The Mg(2+) site is built by serine 39 and threonine 61.

It belongs to the TRAFAC class TrmE-Era-EngA-EngB-Septin-like GTPase superfamily. EngB GTPase family. It depends on Mg(2+) as a cofactor.

Functionally, necessary for normal cell division and for the maintenance of normal septation. This Burkholderia cenocepacia (strain HI2424) protein is Probable GTP-binding protein EngB.